We begin with the raw amino-acid sequence, 1377 residues long: Temperature-sensitive hemagglutinin tsh autotransporter (1377 aa).

Residues 1–52 (MNRIYSLRYSAVARGFIAVSEFARKCVHKSVRRLCFPVLLLIPVLFSAGSLA) form the signal peptide. The region spanning 53-302 (GTVNNELGYQ…AVIPLDFIGQ (250 aa)) is the Peptidase S6 domain. Residues histidine 125, aspartate 153, and serine 259 each act as charge relay system in the active site. Residues 1111-1377 (DINGEAGTWV…AINANIRYSF (267 aa)) enclose the Autotransporter domain.

Post-translationally, the C-terminus is blocked. Cleaved to release the mature protein from the outer membrane.

It localises to the periplasm. The protein resides in the secreted. The protein localises to the cell surface. Its subcellular location is the cell outer membrane. Its function is as follows. Contributes to the development of lesions and deposition of fibrin in the avian air sacs. It can act both as an adhesin and as a serine protease. Agglutinates erythrocytes while in contact with the extracellular surface of the bacterial cells. Can adhere to purified hemoglobin and bind with great efficiency to extracellular matrix proteins. Cleaves casein and exhibits mucinolytic activity. This Escherichia coli protein is Temperature-sensitive hemagglutinin tsh autotransporter (tsh).